A 393-amino-acid polypeptide reads, in one-letter code: S-adenosylmethionine synthase 1 (393 aa).

Residue Glu-9 coordinates Mg(2+). Residue His-15 participates in ATP binding. K(+) is bound at residue Glu-43. L-methionine-binding residues include Glu-56 and Gln-99. ATP is bound by residues 167–169 (DGK), 235–238 (SGRF), Asp-246, 252–253 (RK), Ala-269, Lys-273, and Lys-277. Asp-246 is an L-methionine binding site. Lys-277 contacts L-methionine.

It belongs to the AdoMet synthase family. In terms of assembly, homotetramer. Requires Mn(2+) as cofactor. Mg(2+) is required as a cofactor. It depends on Co(2+) as a cofactor. The cofactor is K(+).

Its subcellular location is the cytoplasm. The enzyme catalyses L-methionine + ATP + H2O = S-adenosyl-L-methionine + phosphate + diphosphate. Its pathway is amino-acid biosynthesis; S-adenosyl-L-methionine biosynthesis; S-adenosyl-L-methionine from L-methionine: step 1/1. Catalyzes the formation of S-adenosylmethionine from methionine and ATP. The reaction comprises two steps that are both catalyzed by the same enzyme: formation of S-adenosylmethionine (AdoMet) and triphosphate, and subsequent hydrolysis of the triphosphate. This is S-adenosylmethionine synthase 1 (METK1) from Solanum tuberosum (Potato).